The following is a 156-amino-acid chain: Transcriptional repressor NrdR (156 aa).

Residues 3–34 (CPFCSETDTKVIDSRLVADGAQVRRRRECLTC) fold into a zinc finger. The region spanning 49-139 (PRVIKQDGTR…VYRSFQDLSE (91 aa)) is the ATP-cone domain.

This sequence belongs to the NrdR family. Requires Zn(2+) as cofactor.

Negatively regulates transcription of bacterial ribonucleotide reductase nrd genes and operons by binding to NrdR-boxes. The protein is Transcriptional repressor NrdR of Saccharophagus degradans (strain 2-40 / ATCC 43961 / DSM 17024).